An 895-amino-acid chain; its full sequence is MIHKMYFFLILLFSLFIIVYSAPNRVTRNETSIVYTYSLDSDYYTRFVMYLNATTLRTDIAPNYFDCSQIVNSERYCVFHFADSFSRLWGAVYSRVCTRTVSDPTEDCQSTWITDNAFPEPLNVKFSGYPSTSGGDVVFTGLFLRLAGGPNTLANSFTNPSKTFLIKVHGNFSDPNFNCNNFTATFPPSSGYIKVYFDDTGKSSLQLRYASPTVSSFILDESKKLVTINGDNYFTKNSLVQVFFDGIIQNNINITVNHSQIQVNNFIRVDPGPMSVNITINAVSIDNNYTYCFPAVISSISSVSNHLGGVVTIKGSKLSSTSIIPTIKIGDKQCTFIKSTTTELECQLEPNETGGKHLPVDVNFGGCNSTSSGSDAVTFTYSIPTLSSGTLSNGIVTLIGTNLGTINDSFIQLNSNGAIDNVKNDQFNISSDETTATFKLPLLKCKSFYINFTRVDISANNKPSISAPLLIYVINKPTVSNGSINIELYYIDCPISPSSTPSITVGNSSSATQCSIPSLKNLSEYYQTTCSIPYGTGTNKQFKFKYNSEESNSEFSYEPPKVESRSFSKGLFNITINGNNFGNSTSLIKVYFNGSDISSEIQSLNDNQFTFKRLNSYENGPINITVDGNSNMEPSFYLTLPPVIYSIINKENKTIGCGGLITISGKNLLTSDDKFKVRVLANNENTTVIVPDEKTLIVRANNKDSPLFVSTLIGDDLGPNTTLTYFEPRITVIPTVKNKKDGISIRVGGVSLSGIINASLGISSENVSLSCDLQCSLSPNETFYLSNPILSSNEKDITNSTDCLSCHSMNSIVVDETSGVLYLQLGPTSYHYDVKIEEIQSSLNPSSSNGGERKSSKLSGGAIAGITIGCVAGAGALVGSVFYFKLITRVKKAFN.

Positions 1 to 21 (MIHKMYFFLILLFSLFIIVYS) are cleaved as a signal peptide. The Extracellular portion of the chain corresponds to 22-861 (APNRVTRNET…ERKSSKLSGG (840 aa)). N-linked (GlcNAc...) asparagine glycosylation is found at asparagine 29, asparagine 52, asparagine 171, asparagine 181, asparagine 253, asparagine 257, asparagine 277, asparagine 288, asparagine 351, asparagine 368, asparagine 407, asparagine 428, asparagine 451, asparagine 481, asparagine 507, asparagine 521, asparagine 573, asparagine 583, asparagine 593, asparagine 623, asparagine 652, asparagine 685, asparagine 720, asparagine 757, asparagine 766, asparagine 780, and asparagine 799. One can recognise an IPT/TIG 1 domain in the interval 295-381 (AVISSISSVS…SGSDAVTFTY (87 aa)). IPT/TIG domains follow at residues 560–638 (PKVE…SFYL) and 642–725 (PVIY…TLTY). A helical transmembrane segment spans residues 862–882 (AIAGITIGCVAGAGALVGSVF). At 883–895 (YFKLITRVKKAFN) the chain is on the cytoplasmic side.

Its subcellular location is the cell membrane. May be involved in the regulation of aggregation. Activates tgrC1. This is Tiger protein D1 (tgrD1) from Dictyostelium discoideum (Social amoeba).